A 511-amino-acid polypeptide reads, in one-letter code: Putative CBL-interacting protein kinase 13 (511 aa).

Residues 25-279 (FEVGKLLGQG…AEGIMENEWF (255 aa)) form the Protein kinase domain. Residues 31–39 (LGQGNFAKV) and Lys-54 contribute to the ATP site. The active-site Proton acceptor is the Asp-147. Residues 165 to 194 (DFGLSAVADGMRRDGLFHTFCGTPAYVAPE) are activation loop. The interval 307 to 340 (VDAPTSPPDTPRTVDSGDVGAAPTRPRKAGSLTS) is disordered. The NAF domain occupies 321-383 (DSGDVGAAPT…PGFDLSGLFD (63 aa)). Residues 400-429 (KHTARFVSAAPVEVIVATLEAAAAAAGMAV) form a PPI region.

Belongs to the protein kinase superfamily. CAMK Ser/Thr protein kinase family. SNF1 subfamily. Requires Mn(2+) as cofactor.

It catalyses the reaction L-seryl-[protein] + ATP = O-phospho-L-seryl-[protein] + ADP + H(+). It carries out the reaction L-threonyl-[protein] + ATP = O-phospho-L-threonyl-[protein] + ADP + H(+). In terms of biological role, CIPK serine-threonine protein kinases interact with CBL proteins. Binding of a CBL protein to the regulatory NAF domain of CIPK protein lead to the activation of the kinase in a calcium-dependent manner. The sequence is that of Putative CBL-interacting protein kinase 13 (CIPK13) from Oryza sativa subsp. japonica (Rice).